Consider the following 211-residue polypeptide: Metalloproteinase inhibitor 3 (211 aa).

Positions 1–23 (MTPWLGLVVLLSCWSLGHWGTEA) are cleaved as a signal peptide. Cys-24 contacts Zn(2+). Involved in metalloproteinase-binding regions lie at residues 24 to 27 (CTCS) and 88 to 89 (ES). 6 disulfide bridges follow: Cys-24–Cys-91, Cys-26–Cys-118, Cys-36–Cys-143, Cys-145–Cys-192, Cys-150–Cys-155, and Cys-163–Cys-184. In terms of domain architecture, NTR spans 24–143 (CTCSPSHPQD…GLNYRYHLGC (120 aa)). Residues 105–188 (TGRVYEGKMY…SKHYACIRQK (84 aa)) are mediates interaction with EFEMP1.

This sequence belongs to the protease inhibitor I35 (TIMP) family. In terms of assembly, interacts with EFEMP1. Interacts with KDR.

The protein localises to the secreted. The protein resides in the extracellular space. Its subcellular location is the extracellular matrix. Its function is as follows. Mediates a variety of processes including matrix regulation and turnover, inflammation, and angiogenesis, through reversible inhibition of zinc protease superfamily enzymes, primarily matrix metalloproteinases (MMPs). Regulates extracellular matrix (ECM) remodeling through inhibition of matrix metalloproteinases (MMP) including MMP-1, MMP-2, MMP-3, MMP-7, MMP-9, MMP-13, MMP-14 and MMP-15. Additionally, modulates the processing of amyloid precursor protein (APP) and apolipoprotein E receptor ApoER2 by inhibiting two alpha-secretases ADAM10 and ADAM17. Functions as a tumor suppressor and a potent inhibitor of angiogenesis. Exerts its anti-angiogenic effect by directly interacting with vascular endothelial growth factor (VEGF) receptor-2/KDR, preventing its binding to the VEGFA ligand. Selectively induces apoptosis in angiogenic endothelial cells through a caspase-independent cell death pathway. Mechanistically, inhibits matrix-induced focal adhesion kinase PTK2 tyrosine phosphorylation and association with paxillin/PXN and disrupts the incorporation of ITGB3, PTK2 and PXN into focal adhesion contacts on the matrix. The sequence is that of Metalloproteinase inhibitor 3 (Timp3) from Rattus norvegicus (Rat).